The chain runs to 161 residues: Phosphopantetheine adenylyltransferase (161 aa).

Substrate is bound at residue Ser11. ATP is bound by residues 11–12 (SF) and His19. The substrate site is built by Lys43, Leu75, and Arg89. ATP-binding positions include 90 to 92 (GLR), Glu100, and 125 to 131 (YSFISSS).

The protein belongs to the bacterial CoaD family. In terms of assembly, homohexamer. Mg(2+) is required as a cofactor.

The protein localises to the cytoplasm. It catalyses the reaction (R)-4'-phosphopantetheine + ATP + H(+) = 3'-dephospho-CoA + diphosphate. The protein operates within cofactor biosynthesis; coenzyme A biosynthesis; CoA from (R)-pantothenate: step 4/5. Reversibly transfers an adenylyl group from ATP to 4'-phosphopantetheine, yielding dephospho-CoA (dPCoA) and pyrophosphate. This chain is Phosphopantetheine adenylyltransferase, found in Staphylococcus carnosus (strain TM300).